The chain runs to 30 residues: DSSESNEIDDVLFLGRRDANSFMKYPQLGN.

Residues Ser2, Ser3, and Ser5 each carry the phosphoserine modification.

Belongs to the osteocalcin/matrix Gla protein family. In terms of processing, requires vitamin K-dependent gamma-carboxylation for its function.

Its subcellular location is the secreted. In terms of biological role, associates with the organic matrix of calcified cartilage. The sequence is that of Matrix Gla protein (mgp) from Prionace glauca (Blue shark).